The sequence spans 266 residues: MRLNIAPAPWPGAPVVVLSAGLGGGGGYWLAQRAALEAQYQLVSYDHNGTGENAGPLPADYSMATMAQELLSALQAAGITRFALVGHALGALIGLQLALDRPEAVSALVLVNGWLTLSPHTRRCFLVRERLLHAGGAQAWVEAQPLFLYPAEWMAARLPRLEAEDALAISHFQGKENLLKRLQALKQADFSRRAAAIACPTLIVSAADDLLVPASCSRVLQAAIPGSQRVEMPWGGHACNVTDADTFNTILCDGLAAMLPVAREIR.

The 225-residue stretch at 14 to 238 (PVVVLSAGLG…RVEMPWGGHA (225 aa)) folds into the AB hydrolase-1 domain.

Belongs to the AB hydrolase superfamily. Hydrolase RutD family.

It carries out the reaction carbamate + 2 H(+) = NH4(+) + CO2. Functionally, involved in pyrimidine catabolism. May facilitate the hydrolysis of carbamate, a reaction that can also occur spontaneously. In Klebsiella pneumoniae (strain 342), this protein is Putative carbamate hydrolase RutD.